Reading from the N-terminus, the 183-residue chain is Putative 3-methyladenine DNA glycosylase (183 aa).

Belongs to the DNA glycosylase MPG family.

This Legionella pneumophila (strain Corby) protein is Putative 3-methyladenine DNA glycosylase.